The chain runs to 977 residues: Leucine--tRNA ligase (977 aa).

Positions 11 to 21 match the 'HIGH' region motif; it reads PYVNGYLHLGH. An insert region spans residues 220 to 318; sequence VFYVYELYSL…EYYNTKVETQ (99 aa). Residues 699–703 carry the 'KMSKS' region motif; it reads KMSKS. K702 serves as a coordination point for ATP.

It belongs to the class-I aminoacyl-tRNA synthetase family.

The protein localises to the cytoplasm. The enzyme catalyses tRNA(Leu) + L-leucine + ATP = L-leucyl-tRNA(Leu) + AMP + diphosphate. This is Leucine--tRNA ligase (leuS) from Nanoarchaeum equitans (strain Kin4-M).